The following is a 311-amino-acid chain: MIKLLFMGTPQFSATVLKGLLDNPAYEILGVVTQPDRAVGRKKDIKVTPVKQLALEHGISIYQPEKLSGSQELIEIMGLGADGIITAAFGQFLPTILLDSVSFAINVHASLLPKYRGGAPIHYAIMNGDKEAGVTIMEMIKEMDAGDMVAKASTPILETDNVGTLFEKLAIIGRDLLLDSLPAYLSGELKPIPQDHSQATFSPNISPEQEKLDWTMFNQEVFNHIRGMNPWPVAHTFLEGQRLKIYEAQLAEGEGLPGQVIVKTKKSLVIATGQGALSLIVVQPAGKPKMSIIDFLNGIGRKLEVGDIIGR.

Residue 110–113 participates in (6S)-5,6,7,8-tetrahydrofolate binding; it reads SLLP.

This sequence belongs to the Fmt family.

It catalyses the reaction L-methionyl-tRNA(fMet) + (6R)-10-formyltetrahydrofolate = N-formyl-L-methionyl-tRNA(fMet) + (6S)-5,6,7,8-tetrahydrofolate + H(+). In terms of biological role, attaches a formyl group to the free amino group of methionyl-tRNA(fMet). The formyl group appears to play a dual role in the initiator identity of N-formylmethionyl-tRNA by promoting its recognition by IF2 and preventing the misappropriation of this tRNA by the elongation apparatus. This Streptococcus pyogenes serotype M3 (strain ATCC BAA-595 / MGAS315) protein is Methionyl-tRNA formyltransferase.